The following is a 1526-amino-acid chain: DNA topoisomerase 2-alpha (1526 aa).

N-acetylmethionine is present on methionine 1. The segment at 1 to 21 is disordered; that stretch reads MELSPLQPVNENMQMNKKKNE. Serine 4 carries the phosphoserine modification. Lysine 17 is covalently cross-linked (Glycyl lysine isopeptide (Lys-Gly) (interchain with G-Cter in SUMO2)). Residues asparagine 90, asparagine 119, and 147–149 contribute to the ATP site; that span reads SSN. Residues lysine 155 and lysine 156 each participate in a glycyl lysine isopeptide (Lys-Gly) (interchain with G-Cter in SUMO2) cross-link. 160-167 is an ATP binding site; the sequence is GRNGYGAK. Lysine 260 participates in a covalent cross-link: Glycyl lysine isopeptide (Lys-Gly) (interchain with G-Cter in SUMO2). Threonine 281 is modified (phosphothreonine). The interval 341–343 is interaction with DNA; the sequence is KKK. A Glycyl lysine isopeptide (Lys-Gly) (interchain with G-Cter in SUMO2) cross-link involves residue lysine 351. 375–377 serves as a coordination point for ATP; sequence QTK. Residues lysine 385, lysine 396, lysine 415, lysine 417, lysine 424, and lysine 439 each participate in a glycyl lysine isopeptide (Lys-Gly) (interchain with G-Cter in SUMO2) cross-link. In terms of domain architecture, Toprim spans 454 to 571; the sequence is CTLILTEGDS…SLLRHRFLEE (118 aa). A Mg(2+)-binding site is contributed by glutamate 460. Glycyl lysine isopeptide (Lys-Gly) (interchain with G-Cter in SUMO2) cross-links involve residues lysine 465, lysine 479, and lysine 528. The Mg(2+) site is built by aspartate 540 and aspartate 542. Glycyl lysine isopeptide (Lys-Gly) (interchain with G-Cter in SUMO2) cross-links involve residues lysine 583, lysine 598, lysine 613, lysine 621, lysine 624, lysine 631, lysine 638, lysine 654, lysine 661, and lysine 675. A Topo IIA-type catalytic domain is found at 714–1166; the sequence is IPSMVDGLKP…SPSDLWKEDL (453 aa). Catalysis depends on tyrosine 804, which acts as the O-(5'-phospho-DNA)-tyrosine intermediate. Residues 989 to 998 form an interaction with DNA region; the sequence is KLQTSLTCNS. Lysine 1074 participates in a covalent cross-link: Glycyl lysine isopeptide (Lys-Gly) (interchain with G-Cter in SUMO2). Disordered regions lie at residues 1089–1117 and 1180–1217; these read WKEAQQKVPDEEENEESDNENSDSVAESG and EKQDEQVGLPGKGGKAKGKKAQMSEVLPSPHGKRVIPQ. Residues 1098–1109 are compositionally biased toward acidic residues; it reads DEEENEESDNEN. Serine 1105 carries the phosphoserine; by CK1 modification. Glycyl lysine isopeptide (Lys-Gly) (interchain with G-Cter in SUMO2) cross-links involve residues lysine 1191 and lysine 1199. A Phosphoserine modification is found at serine 1208. Residue lysine 1223 forms a Glycyl lysine isopeptide (Lys-Gly) (interchain with G-Cter in SUMO2) linkage. The tract at residues 1233–1526 is disordered; the sequence is KIKSENVEGT…LEESDDDDLF (294 aa). A Glycyl lysine isopeptide (Lys-Gly) (interchain with G-Cter in SUMO1); alternate cross-link involves residue lysine 1235. Residue lysine 1235 forms a Glycyl lysine isopeptide (Lys-Gly) (interchain with G-Cter in SUMO2); alternate linkage. Threonine 1242 is modified (phosphothreonine). A Glycyl lysine isopeptide (Lys-Gly) (interchain with G-Cter in SUMO2) cross-link involves residue lysine 1254. A compositionally biased stretch (basic and acidic residues) spans 1255 to 1265; it reads QRIEKKQKKEP. Residues lysine 1271, lysine 1278, and lysine 1281 each participate in a glycyl lysine isopeptide (Lys-Gly) (interchain with G-Cter in SUMO2) cross-link. Residues serine 1290, serine 1292, serine 1294, and serine 1297 each carry the phosphoserine modification. Threonine 1322 bears the Phosphothreonine mark. The span at 1325–1344 shows a compositional bias: acidic residues; the sequence is LDSDEDFSGSDGKDEDEDFF. Phosphoserine occurs at positions 1327 and 1332. Threonine 1349 is subject to Phosphothreonine. Glycyl lysine isopeptide (Lys-Gly) (interchain with G-Cter in SUMO2) cross-links involve residues lysine 1358, lysine 1362, and lysine 1368. Phosphoserine is present on residues serine 1369 and serine 1372. A Glycyl lysine isopeptide (Lys-Gly) (interchain with G-Cter in SUMO2) cross-link involves residue lysine 1380. Serine 1382 and serine 1386 each carry phosphoserine. Positions 1405–1426 are enriched in low complexity; the sequence is SKQTVAVKKTATKSQSSTSTAG. Lysine 1417 participates in a covalent cross-link: Glycyl lysine isopeptide (Lys-Gly) (interchain with G-Cter in SUMO2); alternate. Lysine 1417 is subject to N6-acetyllysine; alternate. Residues 1428 to 1434 are interaction with PLSCR1; it reads KKRAVPK. Lysine 1437 participates in a covalent cross-link: Glycyl lysine isopeptide (Lys-Gly) (interchain with G-Cter in SUMO2); alternate. Residue lysine 1437 is modified to N6-acetyllysine; alternate. Glycyl lysine isopeptide (Lys-Gly) (interchain with G-Cter in SUMO2) cross-links involve residues lysine 1449 and lysine 1454. Residues serine 1464, serine 1466, serine 1469, and serine 1471 each carry the phosphoserine modification. Residues lysine 1479 and lysine 1487 each participate in a glycyl lysine isopeptide (Lys-Gly) (interchain with G-Cter in SUMO2) cross-link. Residues 1486 to 1497 are compositionally biased toward basic and acidic residues; it reads SKGENQDFRVDL. Serine 1520 is subject to Phosphoserine.

The protein belongs to the type II topoisomerase family. Homodimer. Interacts with COPS5. Interacts with RECQL5; this stimulates DNA decatenation. Interacts with SETMAR; stimulates the topoisomerase activity. Interacts with DHX9; this interaction occurs in a E2 enzyme UBE2I- and RNA-dependent manner, negatively regulates DHX9-mediated double-stranded DNA and RNA duplex helicase activity and stimulates TOP2A-mediated supercoiled DNA relaxation activity. Interacts with HNRNPU (via C-terminus); this interaction protects the topoisomerase TOP2A from degradation and positively regulates the relaxation of supercoiled DNA in a RNA-dependent manner. Interacts with MCM3AP. Interacts with ERCC6. Interacts with PLSCR1. Interacts with GCNA; this interaction allows the resolution of topoisomerase II (TOP2A) DNA-protein cross-links. Interacts with POL1RA/RPA1 (via dock II) and UBTF in the context of Pol I complex; may assist Pol I transcription initiation by releasing supercoils occurring during DNA unwinding. Interacts with TPRN; TPRN interacts with a number of DNA damage response proteins, is recruited to sites of DNA damage and may play a role in DNA damage repair. The cofactor is Mg(2+). Requires Mn(2+) as cofactor. Ca(2+) serves as cofactor. Post-translationally, phosphorylation has no effect on catalytic activity. However, phosphorylation at Ser-1105 by CSNK1D/CK1 promotes DNA cleavable complex formation.

It localises to the cytoplasm. The protein resides in the nucleus. Its subcellular location is the nucleoplasm. The protein localises to the nucleolus. The enzyme catalyses ATP-dependent breakage, passage and rejoining of double-stranded DNA.. Key decatenating enzyme that alters DNA topology by binding to two double-stranded DNA molecules, generating a double-stranded break in one of the strands, passing the intact strand through the broken strand, and religating the broken strand. May play a role in regulating the period length of BMAL1 transcriptional oscillation. This chain is DNA topoisomerase 2-alpha (TOP2A), found in Cricetulus griseus (Chinese hamster).